A 430-amino-acid polypeptide reads, in one-letter code: UDP-N-acetylglucosamine 1-carboxyvinyltransferase 1 (430 aa).

22-23 (KN) contributes to the phosphoenolpyruvate binding site. Arg-93 is a UDP-N-acetyl-alpha-D-glucosamine binding site. Cys-117 serves as the catalytic Proton donor. At Cys-117 the chain carries 2-(S-cysteinyl)pyruvic acid O-phosphothioketal. Residues 122-126 (RPVDL), Asp-305, and Val-327 each bind UDP-N-acetyl-alpha-D-glucosamine.

The protein belongs to the EPSP synthase family. MurA subfamily.

The protein localises to the cytoplasm. It catalyses the reaction phosphoenolpyruvate + UDP-N-acetyl-alpha-D-glucosamine = UDP-N-acetyl-3-O-(1-carboxyvinyl)-alpha-D-glucosamine + phosphate. It participates in cell wall biogenesis; peptidoglycan biosynthesis. Cell wall formation. Adds enolpyruvyl to UDP-N-acetylglucosamine. This chain is UDP-N-acetylglucosamine 1-carboxyvinyltransferase 1, found in Listeria innocua serovar 6a (strain ATCC BAA-680 / CLIP 11262).